A 410-amino-acid polypeptide reads, in one-letter code: Translation initiation factor 2 subunit gamma (410 aa).

The tr-type G domain occupies Gln-6 to Lys-203. Residues Gly-15–Thr-22 form a G1 region. Mg(2+) is bound by residues Asp-18, Thr-22, Gly-43, and Ser-45. Asp-18 to Ser-23 serves as a coordination point for GTP. Positions Gly-43 to Arg-47 are G2. Cys-58, Cys-61, Cys-73, and Cys-76 together coordinate Zn(2+). Residues Asp-90 to Gly-93 form a G3 region. Residues Asn-146–Asp-149 and Ser-181–His-183 contribute to the GTP site. The tract at residues Asn-146–Asp-149 is G4. A G5 region spans residues Ser-181–His-183.

It belongs to the TRAFAC class translation factor GTPase superfamily. Classic translation factor GTPase family. EIF2G subfamily. Heterotrimer composed of an alpha, a beta and a gamma chain. Requires Mg(2+) as cofactor.

The enzyme catalyses GTP + H2O = GDP + phosphate + H(+). In terms of biological role, eIF-2 functions in the early steps of protein synthesis by forming a ternary complex with GTP and initiator tRNA. The sequence is that of Translation initiation factor 2 subunit gamma from Methanococcus vannielii (strain ATCC 35089 / DSM 1224 / JCM 13029 / OCM 148 / SB).